We begin with the raw amino-acid sequence, 109 residues long: Polyprenyl transferase subC (109 aa).

2 helical membrane passes run 39–59 (LFCV…NDWI) and 84–104 (QAFV…HVML).

This sequence belongs to the UbiA prenyltransferase family. Requires Mg(2+) as cofactor.

The protein resides in the membrane. It functions in the pathway secondary metabolite biosynthesis; terpenoid biosynthesis. In terms of biological role, polyprenyl transferase; part of the gene cluster that mediates the biosynthesis of the immunosuppressants subglutinols, meroterpenoids consisting of an alpha-pyrone (4-hydroxy-5,6-dimethyl-2-pyrone) moiety attached to a decalin core fused to a five-membered cyclic ether carrying a prenylside chain. The first step of the pathway is the synthesis of the alpha-pyrone moiety by the polyketide synthase subA via condensation of one acetyl-CoA starter unit with 3 malonyl-CoA units and 2 methylations. The alpha-pyrone is then combined with geranylgeranyl pyrophosphate (GGPP) formed by the GGPP synthase subD through the action of the prenyltransferase subC to yield a linear alpha-pyrone diterpenoid. Subsequent steps in the subglutinol biosynthetic pathway involve the decalin core formation, which is thought to be initiated by the epoxidation of the C10-C11 olefin by the FAD-dependent oxidoreductase subE. The following cyclization cascade would be catalyzed by the terpene cyclase subB. Lastly, the FAD-dependent dehydrogenase subF probably catalyzes the five-membered cyclic ether formation to complete the formation of subglutinol A. Subsequent redox reactions appear to give rise to subglutinol C and D, however, it remains unclear which enzymes are responsible for these transformations. SubD may have secondary function in the conversion of the identified subglutinols to subglutinol analog 45, which seems to be the major product of the cluster. The protein is Polyprenyl transferase subC of Metarhizium robertsii (strain ARSEF 23 / ATCC MYA-3075) (Metarhizium anisopliae (strain ARSEF 23)).